The following is a 379-amino-acid chain: ATP phosphoribosyltransferase regulatory subunit (379 aa).

Belongs to the class-II aminoacyl-tRNA synthetase family. HisZ subfamily. In terms of assembly, heteromultimer composed of HisG and HisZ subunits.

The protein localises to the cytoplasm. The protein operates within amino-acid biosynthesis; L-histidine biosynthesis; L-histidine from 5-phospho-alpha-D-ribose 1-diphosphate: step 1/9. Its function is as follows. Required for the first step of histidine biosynthesis. May allow the feedback regulation of ATP phosphoribosyltransferase activity by histidine. The chain is ATP phosphoribosyltransferase regulatory subunit from Caldanaerobacter subterraneus subsp. tengcongensis (strain DSM 15242 / JCM 11007 / NBRC 100824 / MB4) (Thermoanaerobacter tengcongensis).